The chain runs to 236 residues: 2-C-methyl-D-erythritol 4-phosphate cytidylyltransferase (236 aa).

This sequence belongs to the IspD/TarI cytidylyltransferase family. IspD subfamily. In terms of assembly, homodimer.

It catalyses the reaction 2-C-methyl-D-erythritol 4-phosphate + CTP + H(+) = 4-CDP-2-C-methyl-D-erythritol + diphosphate. It functions in the pathway isoprenoid biosynthesis; isopentenyl diphosphate biosynthesis via DXP pathway; isopentenyl diphosphate from 1-deoxy-D-xylulose 5-phosphate: step 2/6. In terms of biological role, catalyzes the formation of 4-diphosphocytidyl-2-C-methyl-D-erythritol from CTP and 2-C-methyl-D-erythritol 4-phosphate (MEP). The sequence is that of 2-C-methyl-D-erythritol 4-phosphate cytidylyltransferase from Salmonella paratyphi B (strain ATCC BAA-1250 / SPB7).